Consider the following 424-residue polypeptide: Type II methyltransferase M.XorII (424 aa).

An SAM-dependent MTase C5-type domain is found at 4 to 367 (PIGIDLFAGA…GQIMKALRKK (364 aa)). Cys-83 is a catalytic residue. The disordered stretch occupies residues 404–424 (RSRPVDRPAPRRHEERELVTA). Over residues 406–424 (RPVDRPAPRRHEERELVTA) the composition is skewed to basic and acidic residues.

Belongs to the class I-like SAM-binding methyltransferase superfamily. C5-methyltransferase family.

It carries out the reaction a 2'-deoxycytidine in DNA + S-adenosyl-L-methionine = a 5-methyl-2'-deoxycytidine in DNA + S-adenosyl-L-homocysteine + H(+). A methylase that recognizes the double-stranded sequence 5'-CGATCG-3', methylates C-? on both strands and protects the DNA from cleavage by the XorII endonuclease. This is Type II methyltransferase M.XorII (xorIIM) from Xanthomonas oryzae pv. oryzae (strain KACC10331 / KXO85).